The primary structure comprises 312 residues: Malate dehydrogenase (312 aa).

NAD(+)-binding positions include 7-13 and D34; that span reads GAAGGIG. Residues R81 and R87 each coordinate substrate. NAD(+) is bound by residues N94 and 117-119; that span reads ITN. N119 and R153 together coordinate substrate. The active-site Proton acceptor is the H177. Residue M227 participates in NAD(+) binding.

The protein belongs to the LDH/MDH superfamily. MDH type 1 family. Homodimer.

It catalyses the reaction (S)-malate + NAD(+) = oxaloacetate + NADH + H(+). Catalyzes the reversible oxidation of malate to oxaloacetate. This is Malate dehydrogenase (mdh) from Klebsiella pneumoniae subsp. pneumoniae (strain ATCC 700721 / MGH 78578).